The primary structure comprises 373 residues: COP9 signalosome complex subunit 5 (373 aa).

An MPN domain is found at 66 to 201; the sequence is CLISRLATTK…IGAFRTLPSK (136 aa). Zn(2+)-binding residues include histidine 147, histidine 149, and aspartate 160. The short motif at 147–160 is the JAMM motif element; that stretch reads HSHPGYGCWLSNID. Residues 289 to 325 are disordered; sequence FTHERSNSISSTSSLTTRHTTDVEMDDQESAQSSLDI. Residues 295–306 are compositionally biased toward low complexity; that stretch reads NSISSTSSLTTR.

Belongs to the peptidase M67A family. CSN5 subfamily. As to quaternary structure, component of the COP9 signalosome (CSN) complex.

It localises to the cytoplasm. It is found in the nucleus. Functionally, catalytic Component of the COP9 signalosome (CSN) complex that acts as an regulator of the ubiquitin (Ubl) conjugation pathway by mediating the deneddylation of the cullin subunit of SCF-type E3 ubiquitin-protein ligase complexes. The CNS complex is involved in the regulation of the mating pheromone response. The protein is COP9 signalosome complex subunit 5 (RRI1) of Kluyveromyces lactis (strain ATCC 8585 / CBS 2359 / DSM 70799 / NBRC 1267 / NRRL Y-1140 / WM37) (Yeast).